We begin with the raw amino-acid sequence, 233 residues long: Pilin-like protein PilA3 (233 aa).

Residues 1-4 (MKRG) constitute a propeptide, leader sequence. N-methylphenylalanine is present on Phe-5. A helical transmembrane segment spans residues 5-25 (FTLVEVLVAMAILVVVLAVGV). The segment at 121 to 143 (LRRSDVNATPSSGSDCTTPPPNS) is disordered. Residues 126–137 (VNATPSSGSDCT) show a composition bias toward polar residues.

The protein resides in the cell inner membrane. Its subcellular location is the cell outer membrane. The protein localises to the periplasm. Functionally, plays an essential role in natural DNA transformation but is not required for pilus biogenesis. The chain is Pilin-like protein PilA3 (pilA3) from Thermus thermophilus (strain ATCC BAA-163 / DSM 7039 / HB27).